Here is an 87-residue protein sequence, read N- to C-terminus: Large ribosomal subunit protein bL27 (87 aa).

Belongs to the bacterial ribosomal protein bL27 family.

The sequence is that of Large ribosomal subunit protein bL27 from Dichelobacter nodosus (strain VCS1703A).